A 133-amino-acid chain; its full sequence is NADH dehydrogenase [ubiquinone] 1 alpha subcomplex subunit 6 (133 aa).

This sequence belongs to the complex I LYR family. Complex I is composed of at least 49 different subunits.

It localises to the mitochondrion inner membrane. Its function is as follows. Accessory subunit of the mitochondrial membrane respiratory chain NADH dehydrogenase (Complex I), that is believed to be not involved in catalysis. Complex I functions in the transfer of electrons from NADH to the respiratory chain. The immediate electron acceptor for the enzyme is believed to be ubiquinone. The protein is NADH dehydrogenase [ubiquinone] 1 alpha subcomplex subunit 6 of Arabidopsis thaliana (Mouse-ear cress).